A 525-amino-acid chain; its full sequence is GMP synthase [glutamine-hydrolyzing] (525 aa).

A Glutamine amidotransferase type-1 domain is found at 9–207; it reads RILILDFGSQ…VMDICKCEKL (199 aa). The Nucleophile role is filled by Cys86. Active-site residues include His181 and Glu183. Positions 208-400 constitute a GMPS ATP-PPase domain; sequence WTAGAIIEDA…LGLPYDMLYR (193 aa). An ATP-binding site is contributed by 235–241; that stretch reads SGGVDSS.

As to quaternary structure, homodimer.

It catalyses the reaction XMP + L-glutamine + ATP + H2O = GMP + L-glutamate + AMP + diphosphate + 2 H(+). It participates in purine metabolism; GMP biosynthesis; GMP from XMP (L-Gln route): step 1/1. In terms of biological role, catalyzes the synthesis of GMP from XMP. The sequence is that of GMP synthase [glutamine-hydrolyzing] from Alteromonas mediterranea (strain DSM 17117 / CIP 110805 / LMG 28347 / Deep ecotype).